Consider the following 297-residue polypeptide: tRNA pseudouridine synthase B (297 aa).

The active-site Nucleophile is Asp39.

Belongs to the pseudouridine synthase TruB family. Type 1 subfamily.

The catalysed reaction is uridine(55) in tRNA = pseudouridine(55) in tRNA. In terms of biological role, responsible for synthesis of pseudouridine from uracil-55 in the psi GC loop of transfer RNAs. This Lactobacillus gasseri (strain ATCC 33323 / DSM 20243 / BCRC 14619 / CIP 102991 / JCM 1131 / KCTC 3163 / NCIMB 11718 / NCTC 13722 / AM63) protein is tRNA pseudouridine synthase B.